Reading from the N-terminus, the 876-residue chain is Valine--tRNA ligase (876 aa).

The 'HIGH' region motif lies at 44 to 54; the sequence is PNVTGKLHLGH. The 'KMSKS' region signature appears at 520 to 524; sequence KMSKS. An ATP-binding site is contributed by Lys-523. Positions 805–876 form a coiled coil; the sequence is LEGLIDMDKE…VKARIEQLKA (72 aa).

Belongs to the class-I aminoacyl-tRNA synthetase family. ValS type 1 subfamily. Monomer.

Its subcellular location is the cytoplasm. It catalyses the reaction tRNA(Val) + L-valine + ATP = L-valyl-tRNA(Val) + AMP + diphosphate. Its function is as follows. Catalyzes the attachment of valine to tRNA(Val). As ValRS can inadvertently accommodate and process structurally similar amino acids such as threonine, to avoid such errors, it has a 'posttransfer' editing activity that hydrolyzes mischarged Thr-tRNA(Val) in a tRNA-dependent manner. This Staphylococcus aureus (strain JH1) protein is Valine--tRNA ligase.